The primary structure comprises 175 residues: RNA pyrophosphohydrolase (175 aa).

Residues 7 to 150 enclose the Nudix hydrolase domain; it reads GYRLNVGIIL…KRQVYIQALK (144 aa). The Nudix box signature appears at 39–60; it reads GGLAPGETAMQAMYRELHEEVG.

It belongs to the Nudix hydrolase family. RppH subfamily. It depends on a divalent metal cation as a cofactor.

In terms of biological role, accelerates the degradation of transcripts by removing pyrophosphate from the 5'-end of triphosphorylated RNA, leading to a more labile monophosphorylated state that can stimulate subsequent ribonuclease cleavage. This is RNA pyrophosphohydrolase from Legionella pneumophila (strain Paris).